The following is an 84-amino-acid chain: Putative regulatory protein Dde_2720 (84 aa).

Belongs to the RemA family.

The chain is Putative regulatory protein Dde_2720 from Oleidesulfovibrio alaskensis (strain ATCC BAA-1058 / DSM 17464 / G20) (Desulfovibrio alaskensis).